A 227-amino-acid polypeptide reads, in one-letter code: Ribosomal RNA large subunit methyltransferase E (227 aa).

S-adenosyl-L-methionine is bound by residues glycine 78, tryptophan 80, aspartate 103, aspartate 119, and aspartate 143. Lysine 183 acts as the Proton acceptor in catalysis.

This sequence belongs to the class I-like SAM-binding methyltransferase superfamily. RNA methyltransferase RlmE family.

The protein localises to the cytoplasm. It catalyses the reaction uridine(2552) in 23S rRNA + S-adenosyl-L-methionine = 2'-O-methyluridine(2552) in 23S rRNA + S-adenosyl-L-homocysteine + H(+). Functionally, specifically methylates the uridine in position 2552 of 23S rRNA at the 2'-O position of the ribose in the fully assembled 50S ribosomal subunit. The sequence is that of Ribosomal RNA large subunit methyltransferase E from Rickettsia canadensis (strain McKiel).